A 318-amino-acid polypeptide reads, in one-letter code: Biotin synthase (318 aa).

A Radical SAM core domain is found at 44–273 (LCGNKFDLCT…TVQIRLAGGR (230 aa)). Positions 62, 66, and 69 each coordinate [4Fe-4S] cluster. [2Fe-2S] cluster contacts are provided by S106, C138, C198, and R268.

The protein belongs to the radical SAM superfamily. Biotin synthase family. As to quaternary structure, homodimer. Requires [4Fe-4S] cluster as cofactor. The cofactor is [2Fe-2S] cluster.

It catalyses the reaction (4R,5S)-dethiobiotin + (sulfur carrier)-SH + 2 reduced [2Fe-2S]-[ferredoxin] + 2 S-adenosyl-L-methionine = (sulfur carrier)-H + biotin + 2 5'-deoxyadenosine + 2 L-methionine + 2 oxidized [2Fe-2S]-[ferredoxin]. The protein operates within cofactor biosynthesis; biotin biosynthesis; biotin from 7,8-diaminononanoate: step 2/2. In terms of biological role, catalyzes the conversion of dethiobiotin (DTB) to biotin by the insertion of a sulfur atom into dethiobiotin via a radical-based mechanism. This Clostridium botulinum (strain Hall / ATCC 3502 / NCTC 13319 / Type A) protein is Biotin synthase.